The chain runs to 968 residues: RNA polymerase-associated protein RapA (968 aa).

The Helicase ATP-binding domain maps to 164 to 334; that stretch reads EVGQRHAPRV…FARLRLLDPD (171 aa). 177 to 184 lines the ATP pocket; sequence DEVGLGKT. The DEAH box signature appears at 280-283; it reads DEAH. The Helicase C-terminal domain maps to 490-644; sequence RVEWLLNYLV…TCPTGRTIYD (155 aa).

This sequence belongs to the SNF2/RAD54 helicase family. RapA subfamily. In terms of assembly, interacts with the RNAP. Has a higher affinity for the core RNAP than for the holoenzyme. Its ATPase activity is stimulated by binding to RNAP.

In terms of biological role, transcription regulator that activates transcription by stimulating RNA polymerase (RNAP) recycling in case of stress conditions such as supercoiled DNA or high salt concentrations. Probably acts by releasing the RNAP, when it is trapped or immobilized on tightly supercoiled DNA. Does not activate transcription on linear DNA. Probably not involved in DNA repair. In Yersinia pseudotuberculosis serotype O:1b (strain IP 31758), this protein is RNA polymerase-associated protein RapA.